A 254-amino-acid polypeptide reads, in one-letter code: Mantle protein (254 aa).

A signal peptide spans 1–16 (MLAVLLFAALVATAYS).

In terms of tissue distribution, prismatic layer of shell (at protein level). Expressed primarily in the mantle with highest level in the outer epithelium of the mantle edge and lower level in the mantle pallium.

The protein localises to the secreted. The polypeptide is Mantle protein (Margaritifera margaritifera (Freshwater pearl mussel)).